The sequence spans 158 residues: Endoribonuclease YbeY (158 aa).

Zn(2+) is bound by residues His117, His121, and His127.

This sequence belongs to the endoribonuclease YbeY family. Zn(2+) is required as a cofactor.

Its subcellular location is the cytoplasm. Functionally, single strand-specific metallo-endoribonuclease involved in late-stage 70S ribosome quality control and in maturation of the 3' terminus of the 16S rRNA. The polypeptide is Endoribonuclease YbeY (Psychromonas ingrahamii (strain DSM 17664 / CCUG 51855 / 37)).